We begin with the raw amino-acid sequence, 592 residues long: Alpha-1,3-galactosidase B (592 aa).

The signal sequence occupies residues 1-14; it reads MKLLSVLSLSLVLS. Cysteine 15 is lipidated: N-palmitoyl cysteine. Cysteine 15 is lipidated: S-diacylglycerol cysteine. 3 PbH1 repeats span residues 429–451, 452–474, and 485–538; these read TPEV…LFST, PRKT…LLCG, and CRHV…VIED.

Belongs to the glycosyl hydrolase 110 family. B subfamily.

It localises to the cell membrane. The enzyme catalyses Hydrolysis of terminal, non-reducing branched (1-&gt;3)-alpha-D-galactosidic residues, producing free D-galactose.. It carries out the reaction Hydrolysis of terminal, non-reducing linear (1-&gt;3)-alpha-D-galactosidic residues, producing free D-galactose.. It catalyses the reaction Hydrolysis of terminal, non-reducing alpha-D-galactose residues in alpha-D-galactosides, including galactose oligosaccharides, galactomannans and galactolipids.. Its function is as follows. Alpha-galactosidase. Removes both branched alpha-1,3-linked galactose residues of blood group B antigens and linear alpha-1,3-linked galactose structures. In Phocaeicola vulgatus (strain ATCC 8482 / DSM 1447 / JCM 5826 / CCUG 4940 / NBRC 14291 / NCTC 11154) (Bacteroides vulgatus), this protein is Alpha-1,3-galactosidase B (glaB1).